The primary structure comprises 268 residues: Tubulin-specific chaperone C (268 aa).

One can recognise a C-CAP/cofactor C-like domain in the interval 98 to 255; that stretch reads PAYTTTLKKH…SAFAFEDFDI (158 aa).

The protein localises to the cytoplasm. It is found in the cytoskeleton. In terms of biological role, tubulin-folding protein; involved in the early step of the tubulin folding pathway. In Saccharomyces cerevisiae (strain ATCC 204508 / S288c) (Baker's yeast), this protein is Tubulin-specific chaperone C (CIN2).